The sequence spans 254 residues: Vesicle transport protein USE1 (254 aa).

Residues 1–228 (MAYISENELK…AYKCGYDCFK (228 aa)) are Cytoplasmic-facing. Residues 229 to 249 (VMLIVLIFMSFVSMVLMMKIF) form a helical; Anchor for type IV membrane protein membrane-spanning segment. The Lumenal segment spans residues 250–254 (KKAST).

The protein belongs to the USE1 family.

It localises to the endoplasmic reticulum membrane. In terms of biological role, SNARE that may be involved in targeting and fusion of Golgi-derived retrograde transport vesicles with the ER. In Caenorhabditis elegans, this protein is Vesicle transport protein USE1.